The primary structure comprises 83 residues: Acylphosphatase (83 aa).

Residues 1 to 83 (MIEGRVQRVG…TGDDWFEVRY (83 aa)) enclose the Acylphosphatase-like domain. Catalysis depends on residues Arg-12 and Asn-30.

The protein belongs to the acylphosphatase family.

The enzyme catalyses an acyl phosphate + H2O = a carboxylate + phosphate + H(+). The sequence is that of Acylphosphatase (acyP) from Synechococcus sp. (strain CC9605).